A 211-amino-acid polypeptide reads, in one-letter code: Ribonuclease HII (211 aa).

Residues 11–200 (EFIAGVDEVG…VKKLLSTLLS (190 aa)) form the RNase H type-2 domain. Residues Asp-17, Glu-18, and Asp-109 each contribute to the a divalent metal cation site.

Belongs to the RNase HII family. Mn(2+) is required as a cofactor. The cofactor is Mg(2+).

It localises to the cytoplasm. It carries out the reaction Endonucleolytic cleavage to 5'-phosphomonoester.. Endonuclease that specifically degrades the RNA of RNA-DNA hybrids. This Histophilus somni (strain 2336) (Haemophilus somnus) protein is Ribonuclease HII.